The following is a 615-amino-acid chain: uncharacterized protein (615 aa).

Polar residues-rich tracts occupy residues 1–11 (MSETSSNSPAS), 41–55 (LSQN…SSKV), and 128–140 (TSGS…NAPP). 2 disordered regions span residues 1-61 (MSET…QALV) and 97-149 (HQNH…KASS). Phosphoserine occurs at positions 149 and 152. The disordered stretch occupies residues 181-217 (LIHPEQTDRGLPYAPDEKFHNSGSLKLPKGASLEDLS). Residues Ser219 and Ser275 each carry the phosphoserine modification. 3 disordered regions span residues 266–481 (KPLA…KFTG), 493–565 (RLQK…KPSF), and 586–615 (GVET…TEEQ). The span at 272–283 (RQRSTADLTESD) shows a compositional bias: polar residues. Phosphothreonine is present on residues Thr276 and Thr297. A compositionally biased stretch (basic and acidic residues) spans 312 to 323 (EAEKGFYTKDGE). The segment covering 356-376 (PSLSSASQPSAASSSSSSEPS) has biased composition (low complexity). A compositionally biased stretch (polar residues) spans 505-522 (PNKSKSPSGTKSPASGET). Thr514 is subject to Phosphothreonine. Ser516 carries the phosphoserine modification. Basic and acidic residues predominate over residues 586 to 599 (GVETRKEVEPKEEA). Residues 600–615 (VIPEEDVEVEVETEEQ) are compositionally biased toward acidic residues.

This is an uncharacterized protein from Schizosaccharomyces pombe (strain 972 / ATCC 24843) (Fission yeast).